A 644-amino-acid chain; its full sequence is uncharacterized protein (644 aa).

Residues 1 to 35 are disordered; sequence MKANGLDNDPARTGMERTDIDSEHPEAQPLLNNNH. Residues 1–90 are Cytoplasmic-facing; sequence MKANGLDNDP…ILNILILINT (90 aa). Positions 14–26 are enriched in basic and acidic residues; the sequence is GMERTDIDSEHPE. S22, S56, and S63 each carry phosphoserine. A helical membrane pass occupies residues 91–111; it reads IWLVTTLISDFFFNINILFGF. Topologically, residues 112 to 122 are vacuolar; that stretch reads SNRYASFNDLT. Residues 123–143 traverse the membrane as a helical segment; the sequence is LIFISIIANSFNLWFNKLGLY. Topologically, residues 144–147 are cytoplasmic; sequence SALD. A helical membrane pass occupies residues 148-168; that stretch reads YSLNVTLCVLTLFNLALTYLI. Residues 169-174 are Vacuolar-facing; the sequence is KYTRQR. Residues 175–195 traverse the membrane as a helical segment; sequence IGFVGTFTYLWTSFSFFIGAI. Topologically, residues 196 to 271 are cytoplasmic; that stretch reads LDWYLLFYNN…EWVSIGFRNT (76 aa). Positions 225–251 are disordered; sequence NENHTNSTENRDRSQYGSGSPTPTHRS. The span at 239 to 251 shows a compositional bias: polar residues; it reads QYGSGSPTPTHRS. S244 carries the phosphoserine modification. Residues 272–292 form a helical membrane-spanning segment; the sequence is IKFLILIFFALFTLNTLLTTL. At 293–644 the chain is on the vacuolar side; it reads DTYRLTHKLP…IGELGKLTED (352 aa). Positions 348–619 constitute an AB hydrolase-1 domain; the sequence is PIILFEHGGY…IVEGGHEIYK (272 aa). The interval 469–492 is disordered; that stretch reads GRGDGDDGDDGNGNDGDGRNHDKT.

Its subcellular location is the vacuole membrane. This is an uncharacterized protein from Saccharomyces cerevisiae (strain ATCC 204508 / S288c) (Baker's yeast).